The sequence spans 455 residues: Gamma-aminobutyric acid receptor subunit alpha-1 (455 aa).

The first 27 residues, 1 to 27 (MKKSRGLSDYLWAWTLILSTLSGRSYG), serve as a signal peptide directing secretion. Residues 28–252 (QPSQDELKDN…FHLKRKIGYF (225 aa)) lie on the Extracellular side of the membrane. N-linked (GlcNAc...) asparagine glycosylation is present at Asn37. Arg93 serves as a coordination point for 4-aminobutanoate. An N-linked (GlcNAc...) asparagine glycan is attached at Asn137. 4-aminobutanoate is bound at residue Thr156. Cys165 and Cys179 are joined by a disulfide. Residues 253–273 (VIQTYLPCIMTVILSQVSFWL) form a helical membrane-spanning segment. At 274-278 (NRESV) the chain is on the cytoplasmic side. Residues 279 to 300 (PARTVFGVTTVLTMTTLSISAR) form a helical membrane-spanning segment. The Extracellular portion of the chain corresponds to 301–310 (NSLPKVAYAT). A helical membrane pass occupies residues 311 to 332 (AMDWFIAVCYAFVFSALIEFAT). The Cytoplasmic segment spans residues 333 to 420 (VNYFTKRGYA…TFNSVSKIDR (88 aa)). The helical transmembrane segment at 421-440 (LSRIAFPLLFGIFNLVYWAT) threads the bilayer. The Extracellular segment spans residues 441 to 455 (YLNREPQLKAPTPHQ).

The protein belongs to the ligand-gated ion channel (TC 1.A.9) family. Gamma-aminobutyric acid receptor (TC 1.A.9.5) subfamily. GABRA1 sub-subfamily. Heteropentamer, formed by a combination of alpha (GABRA1-6), beta (GABRB1-3), gamma (GABRG1-3), delta (GABRD), epsilon (GABRE), rho (GABRR1-3), pi (GABRP) and theta (GABRQ) subunits, each subunit exhibiting distinct physiological and pharmacological properties. Interacts with UBQLN1. Interacts with TRAK1. Interacts with KIF21B. Identified in a complex of 720 kDa composed of LHFPL4, NLGN2, GABRA1, GABRB2, GABRG2 and GABRB3. Interacts with LHFPL4. Interacts with NLGN2. Interacts with SHISA7; interaction leads to the regulation of GABA(A) receptor trafficking, channel deactivation kinetics and pharmacology. Post-translationally, glycosylated. As to expression, expressed in the cerebellum.

The protein localises to the postsynaptic cell membrane. The protein resides in the cell membrane. Its subcellular location is the cytoplasmic vesicle membrane. The enzyme catalyses chloride(in) = chloride(out). With respect to regulation, allosterically activated by benzodiazepines, the neuroanesthetic alphaxalone and pentobarbital. Inhibited by the antagonist bicuculline. Potentiated by histamine. Its function is as follows. Alpha subunit of the heteropentameric ligand-gated chloride channel gated by Gamma-aminobutyric acid (GABA), a major inhibitory neurotransmitter in the brain. GABA-gated chloride channels, also named GABA(A) receptors (GABAAR), consist of five subunits arranged around a central pore and contain GABA active binding site(s) located at the alpha and beta subunit interface(s). When activated by GABA, GABAARs selectively allow the flow of chloride anions across the cell membrane down their electrochemical gradient. Alpha-1/GABRA1-containing GABAARs are largely synaptic. Chloride influx into the postsynaptic neuron following GABAAR opening decreases the neuron ability to generate a new action potential, thereby reducing nerve transmission. GABAARs containing alpha-1 and beta-2 or -3 subunits exhibit synaptogenic activity; the gamma-2 subunit being necessary but not sufficient to induce rapid synaptic contacts formation. GABAARs function also as histamine receptor where histamine binds at the interface of two neighboring beta subunits and potentiates GABA response. GABAARs containing alpha, beta and epsilon subunits also permit spontaneous chloride channel activity while preserving the structural information required for GABA-gated openings. Alpha-1-mediated plasticity in the orbitofrontal cortex regulates context-dependent action selection. Together with rho subunits, may also control neuronal and glial GABAergic transmission in the cerebellum. In Mus musculus (Mouse), this protein is Gamma-aminobutyric acid receptor subunit alpha-1.